A 148-amino-acid chain; its full sequence is Nucleoside diphosphate kinase (148 aa).

ATP-binding residues include lysine 9, phenylalanine 57, arginine 85, threonine 91, arginine 102, and asparagine 112. Threonine 91 bears the Phosphothreonine mark. The Pros-phosphohistidine intermediate role is filled by histidine 115. Serine 122 bears the Phosphoserine mark.

Belongs to the NDK family. As to quaternary structure, homotetramer. Mg(2+) is required as a cofactor.

It is found in the cytoplasm. It catalyses the reaction a 2'-deoxyribonucleoside 5'-diphosphate + ATP = a 2'-deoxyribonucleoside 5'-triphosphate + ADP. It carries out the reaction a ribonucleoside 5'-diphosphate + ATP = a ribonucleoside 5'-triphosphate + ADP. Functionally, major role in the synthesis of nucleoside triphosphates other than ATP. The ATP gamma phosphate is transferred to the NDP beta phosphate via a ping-pong mechanism, using a phosphorylated active-site intermediate. The chain is Nucleoside diphosphate kinase from Oceanobacillus iheyensis (strain DSM 14371 / CIP 107618 / JCM 11309 / KCTC 3954 / HTE831).